A 542-amino-acid polypeptide reads, in one-letter code: Neurofilament light polypeptide (542 aa).

S2 carries the post-translational modification N-acetylserine. The head stretch occupies residues 2-93; the sequence is SSFSYEPYFS…KSIRTQEKAQ (92 aa). The O-linked (GlcNAc) threonine glycan is linked to T21. R23 bears the Asymmetric dimethylarginine; alternate mark. R23 is subject to Omega-N-methylarginine; alternate. O-linked (GlcNAc) serine glycosylation occurs at S27. R30 carries the omega-N-methylarginine modification. Y43 is subject to Phosphotyrosine. Residues S56, S67, and S103 each carry the phosphoserine modification. The IF rod domain occupies 90-401; it reads EKAQLQDLND…KLLEGEETRL (312 aa). The interval 94-125 is coil 1A; that stretch reads LQDLNDRFASFIERVHELEQQNKVLEAELLVL. The interval 126 to 138 is linker 1; sequence RQKHSEPSRFRAL. The tract at residues 139–234 is coil 1B; the sequence is YEQEIRDLRL…KVHEEEIAEL (96 aa). Residues 235-253 form a linker 12 region; it reads QAQIQYAQISVEMDVSSKP. The tract at residues 254–272 is coil 2A; the sequence is DLSAALKDIRAQYEKLAAK. The segment at 273–281 is linker 2; the sequence is NMQNAEEWF. The segment at 282–397 is coil 2B; that stretch reads KSRFTVLTES…AAYRKLLEGE (116 aa). Positions 382 to 392 are epitope; recognized by IF-specific monoclonal antibody; that stretch reads ALDIEIAAYRK. The segment at 398 to 444 is tail, subdomain A; it reads ETRLSFTSVGSITSGYSQSSQVFGRSAYSGLQSSSYLMSARAFPAYY. A tail region spans residues 398–542; that stretch reads ETRLSFTSVG…GEEQAAKKKD (145 aa). The segment at 445–542 is tail, subdomain B (acidic); it reads TSHVQEEQSE…GEEQAAKKKD (98 aa). Residues 451 to 542 are disordered; it reads EQSEVEETIE…GEEQAAKKKD (92 aa). S453 is modified (phosphoserine). Basic and acidic residues predominate over residues 460 to 471; it reads EATKAEEAKDEP. Residues 472-527 are compositionally biased toward acidic residues; that stretch reads PSEGEAEEEEKEKEEGEEEEGAEEEEAAKDESEDAKEEEGGEGEEEDTKESEEEEK. Residues S473 and S503 each carry the phosphoserine modification. T519 is modified (phosphothreonine). 2 positions are modified to phosphoserine: S522 and S531. Over residues 528 to 542 the composition is skewed to basic and acidic residues; sequence KEESAGEEQAAKKKD.

This sequence belongs to the intermediate filament family. Forms homodimers (in vitro). Forms heterodimers with NEFH or NEFM; which can further hetero-oligomerize (in vitro). Forms heterodimers with INA (in vitro). Interacts with ARHGEF28. Interacts with TRIM2. In terms of processing, O-glycosylated; contains three N-acetylglucosamine side chains. Phosphorylated in the head and rod regions by the PKC kinase PKN1, leading to the inhibition of polymerization. Post-translationally, ubiquitinated in the presence of TRIM2 and UBE2D1. As to expression, expressed in the dorsal root ganglion neurons (at protein level).

It localises to the cell projection. It is found in the axon. Its subcellular location is the cytoplasm. The protein localises to the cytoskeleton. In terms of biological role, neurofilaments usually contain three intermediate filament proteins: NEFL, NEFM, and NEFH which are involved in the maintenance of neuronal caliber. May additionally cooperate with the neuronal intermediate filament proteins PRPH and INA to form neuronal filamentous networks. In Rattus norvegicus (Rat), this protein is Neurofilament light polypeptide (Nefl).